The primary structure comprises 571 residues: Proline-rich protein 35 (571 aa).

Disordered regions lie at residues 1–27 (MSREAGSCRVGTGARARSRKPKKPHYI), 79–187 (GSTT…EGSV), 286–402 (APVS…GSPE), and 476–571 (GPQA…GAEV). Positions 16-26 (ARSRKPKKPHY) are enriched in basic residues. A compositionally biased stretch (gly residues) spans 165 to 175 (GMGGDPRGVGA). The span at 316 to 336 (TPRDPGQEGELERAAQSDPRR) shows a compositional bias: basic and acidic residues. Residues 351 to 367 (PSLTRFCSRSSLPTGSS) show a composition bias toward polar residues. Residues 380-399 (PETPGPEGPLPLQPRGPVPG) are compositionally biased toward pro residues.

The polypeptide is Proline-rich protein 35 (PRR35) (Homo sapiens (Human)).